The primary structure comprises 204 residues: Somatotropin (204 aa).

A signal peptide spans methionine 1–serine 17. Glutamine 18 carries the post-translational modification Pyrrolidone carboxylic acid. Zn(2+) is bound at residue histidine 36. Cysteines 69 and 177 form a disulfide. Glutamate 186 contributes to the Zn(2+) binding site. A disulfide bridge connects residues cysteine 194 and cysteine 202.

Belongs to the somatotropin/prolactin family.

The protein resides in the secreted. In terms of biological role, growth hormone plays an important role in growth control and is involved in the regulation of several anabolic processes. Implicated as an osmoregulatory substance important for seawater adaptation. The protein is Somatotropin (gh) of Odontesthes argentinensis (Marine silverside).